The primary structure comprises 203 residues: Thymidine kinase (203 aa).

ATP is bound by residues 21 to 28 (GCMFAGKT) and 99 to 102 (DEIQ). The active-site Proton acceptor is the Glu-100. Residues Cys-156, Cys-159, Cys-194, and Cys-197 each contribute to the Zn(2+) site.

This sequence belongs to the thymidine kinase family. In terms of assembly, homotetramer.

It is found in the cytoplasm. It catalyses the reaction thymidine + ATP = dTMP + ADP + H(+). The polypeptide is Thymidine kinase (Mesoplasma florum (strain ATCC 33453 / NBRC 100688 / NCTC 11704 / L1) (Acholeplasma florum)).